The primary structure comprises 237 residues: N-(5'-phosphoribosyl)anthranilate isomerase (237 aa).

It belongs to the TrpF family.

The catalysed reaction is N-(5-phospho-beta-D-ribosyl)anthranilate = 1-(2-carboxyphenylamino)-1-deoxy-D-ribulose 5-phosphate. It participates in amino-acid biosynthesis; L-tryptophan biosynthesis; L-tryptophan from chorismate: step 3/5. The chain is N-(5'-phosphoribosyl)anthranilate isomerase (TRP1) from Komagataella pastoris (Yeast).